The following is a 492-amino-acid chain: Phytoene desaturase (lycopene-forming) (492 aa).

5–38 (TVIGAGFGGLALAIRLQAAGIPVLLLEQRDKPGG) provides a ligand contact to FAD.

This sequence belongs to the carotenoid/retinoid oxidoreductase family. The cofactor is FAD.

It localises to the cell membrane. It carries out the reaction 15-cis-phytoene + 4 A = all-trans-lycopene + 4 AH2. The protein operates within carotenoid biosynthesis; lycopene biosynthesis. Inhibited by NAD and NADP. In terms of biological role, converts 15-cis-phytoene into all-trans-lycopene via the intermediary of all-trans-phytofluene, all-trans-zeta-carotene and all-trans-neurosporene, by the introduction of four double bonds. This is Phytoene desaturase (lycopene-forming) (crtI) from Pantoea ananas (Erwinia uredovora).